Reading from the N-terminus, the 757-residue chain is RNA-directed RNA polymerase catalytic subunit (757 aa).

Residues 50–82 form a disordered region; sequence SEKGKWTTNTETGAPQLNPIDGPLPEDNEPSGY. Positions 55-64 are enriched in polar residues; that stretch reads WTTNTETGAP. 2 short sequence motifs (nuclear localization signal) span residues 187–195 and 203–216; these read RKRRVRDNM and RTIG…NKRS. A promoter-binding site region spans residues 249 to 256; sequence RGFVYFVE. The region spanning 286–483 is the RdRp catalytic domain; sequence VRKMMTNSQD…GINMSKKKSY (198 aa).

Belongs to the influenza viruses polymerase PB1 family. In terms of assembly, influenza RNA polymerase is composed of three subunits: PB1, PB2 and PA. Interacts (via N-terminus) with PA (via C-terminus). Interacts (via C-terminus) with PB2 (via N-terminus); this interaction is essential for transcription initiation. Phosphorylated by host PRKCA.

It is found in the host nucleus. The protein resides in the host cytoplasm. The enzyme catalyses RNA(n) + a ribonucleoside 5'-triphosphate = RNA(n+1) + diphosphate. In terms of biological role, RNA-dependent RNA polymerase which is responsible for replication and transcription of virus RNA segments. The transcription of viral mRNAs occurs by a unique mechanism called cap-snatching. 5' methylated caps of cellular mRNAs are cleaved after 10-13 nucleotides by PA. In turn, these short capped RNAs are used as primers by PB1 for transcription of viral mRNAs. During virus replication, PB1 initiates RNA synthesis and copy vRNA into complementary RNA (cRNA) which in turn serves as a template for the production of more vRNAs. This is RNA-directed RNA polymerase catalytic subunit from Aves.